The sequence spans 239 residues: Ribosomal RNA small subunit methyltransferase G (239 aa).

S-adenosyl-L-methionine-binding positions include Gly78, Phe83, 129–130 (AE), and Arg148.

It belongs to the methyltransferase superfamily. RNA methyltransferase RsmG family.

It localises to the cytoplasm. In terms of biological role, specifically methylates the N7 position of a guanine in 16S rRNA. The polypeptide is Ribosomal RNA small subunit methyltransferase G (Alkaliphilus oremlandii (strain OhILAs) (Clostridium oremlandii (strain OhILAs))).